Consider the following 76-residue polypeptide: DNA-binding protein S1FA2 (76 aa).

A Nuclear localization signal motif is present at residues 50 to 55 (PPRKKK). The span at 51–66 (PRKKKPLSKKKLKREK) shows a compositional bias: basic residues. Residues 51 to 76 (PRKKKPLSKKKLKREKLKQGVPVPGE) are disordered.

Belongs to the S1FA transcription factor family.

It localises to the nucleus. In terms of biological role, DNA-binding protein that specifically recognizes a negative element (S1F) within the RPS1 promoter. This chain is DNA-binding protein S1FA2 (S1FA2), found in Arabidopsis thaliana (Mouse-ear cress).